A 370-amino-acid chain; its full sequence is Dihydroorotate dehydrogenase (quinone) (370 aa).

FMN is bound by residues 67–71 (AGFDK) and threonine 91. Position 71 (lysine 71) interacts with substrate. Substrate is bound at residue 116–120 (NRMGF). Residues asparagine 146 and asparagine 179 each contribute to the FMN site. Asparagine 179 is a binding site for substrate. Catalysis depends on serine 182, which acts as the Nucleophile. Residue asparagine 184 participates in substrate binding. Residues lysine 222 and threonine 250 each coordinate FMN. 251–252 (NT) contributes to the substrate binding site. FMN is bound by residues glycine 276, glycine 305, and 326–327 (YS).

Belongs to the dihydroorotate dehydrogenase family. Type 2 subfamily. In terms of assembly, monomer. FMN serves as cofactor.

The protein localises to the cell membrane. The enzyme catalyses (S)-dihydroorotate + a quinone = orotate + a quinol. Its pathway is pyrimidine metabolism; UMP biosynthesis via de novo pathway; orotate from (S)-dihydroorotate (quinone route): step 1/1. Functionally, catalyzes the conversion of dihydroorotate to orotate with quinone as electron acceptor. The protein is Dihydroorotate dehydrogenase (quinone) of Streptomyces griseus subsp. griseus (strain JCM 4626 / CBS 651.72 / NBRC 13350 / KCC S-0626 / ISP 5235).